The sequence spans 231 residues: uncharacterized protein (231 aa).

10 to 34 contributes to the NADP(+) binding site; that stretch reads VVTGAGSGIGEAIATLLHEEGAKVV. S140 serves as a coordination point for substrate. The Proton acceptor role is filled by Y153.

Belongs to the short-chain dehydrogenases/reductases (SDR) family.

This is an uncharacterized protein from Staphylococcus aureus (strain MRSA252).